A 499-amino-acid polypeptide reads, in one-letter code: Aspartyl/glutamyl-tRNA(Asn/Gln) amidotransferase subunit B (499 aa).

It belongs to the GatB/GatE family. GatB subfamily. In terms of assembly, heterotrimer of A, B and C subunits.

The catalysed reaction is L-glutamyl-tRNA(Gln) + L-glutamine + ATP + H2O = L-glutaminyl-tRNA(Gln) + L-glutamate + ADP + phosphate + H(+). The enzyme catalyses L-aspartyl-tRNA(Asn) + L-glutamine + ATP + H2O = L-asparaginyl-tRNA(Asn) + L-glutamate + ADP + phosphate + 2 H(+). In terms of biological role, allows the formation of correctly charged Asn-tRNA(Asn) or Gln-tRNA(Gln) through the transamidation of misacylated Asp-tRNA(Asn) or Glu-tRNA(Gln) in organisms which lack either or both of asparaginyl-tRNA or glutaminyl-tRNA synthetases. The reaction takes place in the presence of glutamine and ATP through an activated phospho-Asp-tRNA(Asn) or phospho-Glu-tRNA(Gln). The polypeptide is Aspartyl/glutamyl-tRNA(Asn/Gln) amidotransferase subunit B (Bartonella quintana (strain Toulouse) (Rochalimaea quintana)).